The primary structure comprises 390 residues: Precorrin-6Y C(5,15)-methyltransferase [decarboxylating] (390 aa).

Belongs to the precorrin methyltransferase family.

It catalyses the reaction precorrin-6B + 2 S-adenosyl-L-methionine = precorrin-8X + 2 S-adenosyl-L-homocysteine + CO2 + 3 H(+). Its pathway is cofactor biosynthesis; adenosylcobalamin biosynthesis; cob(II)yrinate a,c-diamide from precorrin-2 (aerobic route): step 7/10. In terms of biological role, catalyzes the methylation of both C-5 and C-15 in precorrin-6Y to form precorrin-8X. The sequence is that of Precorrin-6Y C(5,15)-methyltransferase [decarboxylating] (cobL) from Mycobacterium tuberculosis (strain CDC 1551 / Oshkosh).